A 113-amino-acid chain; its full sequence is MSQDIYDYANKLERAVRALPEYRKALEAREEIKADEAASQLFDEFVAVQEKLQGLMQTGQLPTETEQADIQALSQKIEANDLLKGYFNAQQALSIYVNDIERIVFAPLKDLAK.

It belongs to the UPF0342 family.

This is UPF0342 protein SZO_10960 from Streptococcus equi subsp. zooepidemicus (strain H70).